The primary structure comprises 153 residues: Small ribosomal subunit protein uS19A (153 aa).

The protein belongs to the universal ribosomal protein uS19 family. As to quaternary structure, component of the small ribosomal subunit (SSU). Mature yeast ribosomes consist of a small (40S) and a large (60S) subunit. The 40S small subunit contains 1 molecule of ribosomal RNA (18S rRNA) and at least 33 different proteins. The large 60S subunit contains 3 rRNA molecules (25S, 5.8S and 5S rRNA) and at least 46 different proteins.

The protein localises to the cytoplasm. It localises to the nucleus. Its subcellular location is the nucleolus. Component of the ribosome, a large ribonucleoprotein complex responsible for the synthesis of proteins in the cell. The small ribosomal subunit (SSU) binds messenger RNAs (mRNAs) and translates the encoded message by selecting cognate aminoacyl-transfer RNA (tRNA) molecules. The large subunit (LSU) contains the ribosomal catalytic site termed the peptidyl transferase center (PTC), which catalyzes the formation of peptide bonds, thereby polymerizing the amino acids delivered by tRNAs into a polypeptide chain. The nascent polypeptides leave the ribosome through a tunnel in the LSU and interact with protein factors that function in enzymatic processing, targeting, and the membrane insertion of nascent chains at the exit of the ribosomal tunnel. uS19 is involved in the nuclear export of the small ribosomal subunit precursor. Has a role in the late stage of the assembly of pre-40S particles within the nucleus and controls their export to the cytoplasm. This chain is Small ribosomal subunit protein uS19A (rps1501), found in Schizosaccharomyces pombe (strain 972 / ATCC 24843) (Fission yeast).